A 1353-amino-acid chain; its full sequence is Trifunctional purine biosynthetic protein adenosine-3 (1353 aa).

The ATP-grasp domain maps to 114–321; it reads KDFMLRHGIP…LFDVMEACCS (208 aa). Residues 193 to 196, E200, R223, and N232 contribute to the ATP site; that span reads EELL. The Mg(2+) site is built by E291 and N293. The tract at residues 441–1155 is AIRS domain; it reads GLSYKDSGVD…QKMLSQRRKR (715 aa). A phosphoserine mark is found at S814 and S816. The segment at 1153–1353 is GART domain; the sequence is RKRVAVLISG…ALISPEVSSQ (201 aa). 1164 to 1166 serves as a coordination point for N(1)-(5-phospho-beta-D-ribosyl)glycinamide; that stretch reads GSN. Residues R1219, 1244-1247, and N1261 contribute to the (6R)-10-formyltetrahydrofolate site; that span reads MRVL. The active-site Proton donor is the H1263. 1295–1299 contributes to the (6R)-10-formyltetrahydrofolate binding site; the sequence is DEGVD. 1325–1328 contacts N(1)-(5-phospho-beta-D-ribosyl)glycinamide; sequence HKAE.

In the N-terminal section; belongs to the GARS family. It in the central section; belongs to the AIR synthase family. This sequence in the C-terminal section; belongs to the GART family. As to quaternary structure, homodimer. Mg(2+) is required as a cofactor. Mn(2+) serves as cofactor.

It catalyses the reaction 5-phospho-beta-D-ribosylamine + glycine + ATP = N(1)-(5-phospho-beta-D-ribosyl)glycinamide + ADP + phosphate + H(+). The catalysed reaction is 2-formamido-N(1)-(5-O-phospho-beta-D-ribosyl)acetamidine + ATP = 5-amino-1-(5-phospho-beta-D-ribosyl)imidazole + ADP + phosphate + H(+). The enzyme catalyses N(1)-(5-phospho-beta-D-ribosyl)glycinamide + (6R)-10-formyltetrahydrofolate = N(2)-formyl-N(1)-(5-phospho-beta-D-ribosyl)glycinamide + (6S)-5,6,7,8-tetrahydrofolate + H(+). It functions in the pathway purine metabolism; IMP biosynthesis via de novo pathway; 5-amino-1-(5-phospho-D-ribosyl)imidazole from N(2)-formyl-N(1)-(5-phospho-D-ribosyl)glycinamide: step 2/2. Its pathway is purine metabolism; IMP biosynthesis via de novo pathway; N(1)-(5-phospho-D-ribosyl)glycinamide from 5-phospho-alpha-D-ribose 1-diphosphate: step 2/2. The protein operates within purine metabolism; IMP biosynthesis via de novo pathway; N(2)-formyl-N(1)-(5-phospho-D-ribosyl)glycinamide from N(1)-(5-phospho-D-ribosyl)glycinamide (10-formyl THF route): step 1/1. Its function is as follows. Trifunctional enzyme that catalyzes three distinct reactions as part of the 'de novo' inosine monophosphate biosynthetic pathway. The polypeptide is Trifunctional purine biosynthetic protein adenosine-3 (Drosophila melanogaster (Fruit fly)).